Here is a 91-residue protein sequence, read N- to C-terminus: Small ribosomal subunit protein bS18 (91 aa).

It belongs to the bacterial ribosomal protein bS18 family. In terms of assembly, part of the 30S ribosomal subunit. Forms a tight heterodimer with protein bS6.

In terms of biological role, binds as a heterodimer with protein bS6 to the central domain of the 16S rRNA, where it helps stabilize the platform of the 30S subunit. In Burkholderia ambifaria (strain MC40-6), this protein is Small ribosomal subunit protein bS18.